Here is a 550-residue protein sequence, read N- to C-terminus: Hydroxylamine reductase (550 aa).

[2Fe-2S] cluster is bound by residues cysteine 3, cysteine 6, cysteine 18, and cysteine 25. Histidine 249, glutamate 273, cysteine 317, cysteine 405, cysteine 433, cysteine 458, glutamate 492, and lysine 494 together coordinate hybrid [4Fe-2O-2S] cluster. Cysteine 405 is modified (cysteine persulfide).

The protein belongs to the HCP family. It depends on [2Fe-2S] cluster as a cofactor. Hybrid [4Fe-2O-2S] cluster serves as cofactor.

It localises to the cytoplasm. It carries out the reaction A + NH4(+) + H2O = hydroxylamine + AH2 + H(+). Functionally, catalyzes the reduction of hydroxylamine to form NH(3) and H(2)O. In Salmonella enteritidis PT4 (strain P125109), this protein is Hydroxylamine reductase.